The sequence spans 1117 residues: Isoleucine--tRNA ligase (1117 aa).

A 'HIGH' region motif is present at residues 64-74 (PFANGLPHYGH). The 'KMSKS' region motif lies at 647–651 (KLSKR). Position 650 (lysine 650) interacts with ATP.

The protein belongs to the class-I aminoacyl-tRNA synthetase family. IleS type 2 subfamily. As to quaternary structure, monomer. Zn(2+) is required as a cofactor.

It is found in the cytoplasm. It catalyses the reaction tRNA(Ile) + L-isoleucine + ATP = L-isoleucyl-tRNA(Ile) + AMP + diphosphate. In terms of biological role, catalyzes the attachment of isoleucine to tRNA(Ile). As IleRS can inadvertently accommodate and process structurally similar amino acids such as valine, to avoid such errors it has two additional distinct tRNA(Ile)-dependent editing activities. One activity is designated as 'pretransfer' editing and involves the hydrolysis of activated Val-AMP. The other activity is designated 'posttransfer' editing and involves deacylation of mischarged Val-tRNA(Ile). This Ehrlichia ruminantium (strain Welgevonden) protein is Isoleucine--tRNA ligase.